The following is a 443-amino-acid chain: tRNA modification GTPase MnmE (443 aa).

Residues Arg23, Glu81, and Lys119 each contribute to the (6S)-5-formyl-5,6,7,8-tetrahydrofolate site. One can recognise a TrmE-type G domain in the interval 214–369 (GMRVAILGKP…LLSALKERAI (156 aa)). Residues 224–229 (NVGKST), 243–249 (SEYPGTT), and 268–271 (DTAG) contribute to the GTP site. Ser228 and Thr249 together coordinate Mg(2+). Position 443 (Lys443) interacts with (6S)-5-formyl-5,6,7,8-tetrahydrofolate.

This sequence belongs to the TRAFAC class TrmE-Era-EngA-EngB-Septin-like GTPase superfamily. TrmE GTPase family. In terms of assembly, homodimer. Heterotetramer of two MnmE and two MnmG subunits. K(+) is required as a cofactor.

The protein resides in the cytoplasm. Exhibits a very high intrinsic GTPase hydrolysis rate. Involved in the addition of a carboxymethylaminomethyl (cmnm) group at the wobble position (U34) of certain tRNAs, forming tRNA-cmnm(5)s(2)U34. This Anaplasma marginale (strain St. Maries) protein is tRNA modification GTPase MnmE.